A 262-amino-acid polypeptide reads, in one-letter code: Homeobox protein vent1 (262 aa).

Basic and acidic residues-rich tracts occupy residues 16 to 26 and 44 to 55; these read REEAPDGKDSV and YAKEIPRRKDGQ. Residues 16-129 form a disordered region; that stretch reads REEAPDGKDS…KSPKSDLQRR (114 aa). Residues 58 to 79 are compositionally biased toward polar residues; sequence GEITSFQCSSEEARNRQFSNPS. Residues 114–128 are compositionally biased toward basic and acidic residues; the sequence is DTEHRSKSPKSDLQR. Positions 127-186 form a DNA-binding region, homeobox; sequence QRRLRTAFTPQQITRLEQAFNKQRYLGASERKKLATSLQLSEIQVKTWFQNRRMKLKRQI.

Its subcellular location is the nucleus. Its function is as follows. Transcriptional repressor. Cooperates with vent2 in a ventral signaling pathway downstream of bmp4, which antagonizes the Spemann organizer and dorsal mesoderm formation, and leads to ventral mesoderm formation. Acts downstream of bmp4 to repress transcription of foxa4-B/XFD-1'. Binds to DNA with preference for the target sequence 5'-CTATT[T/C]G-3'. Also binds 5'-TGCATTTTG-3' at a lower frequency, and occasionally 5'-TTGATC-3'. Binds to the homeobox 2 (HBX2) repressor element in the promoter of the myf5 gene. Cooperates with vent2 to repress myf5 expression in the ventral domain. This is Homeobox protein vent1 from Xenopus tropicalis (Western clawed frog).